Consider the following 184-residue polypeptide: Outer-membrane lipoprotein carrier protein (184 aa).

Residues 1–19 (MKAFLKILMVLIFVSVAYA) form the signal peptide.

It belongs to the LolA family. Monomer.

Its subcellular location is the periplasm. Functionally, participates in the translocation of lipoproteins from the inner membrane to the outer membrane. Only forms a complex with a lipoprotein if the residue after the N-terminal Cys is not an aspartate (The Asp acts as a targeting signal to indicate that the lipoprotein should stay in the inner membrane). This chain is Outer-membrane lipoprotein carrier protein, found in Helicobacter pylori (strain P12).